A 166-amino-acid chain; its full sequence is NAD(P)H-quinone oxidoreductase subunit I, chloroplastic (166 aa).

4Fe-4S ferredoxin-type domains lie at 55-84 (GRIH…VDWK) and 95-124 (LNYS…MTEE). [4Fe-4S] cluster contacts are provided by cysteine 64, cysteine 67, cysteine 70, cysteine 74, cysteine 104, cysteine 107, cysteine 110, and cysteine 114.

It belongs to the complex I 23 kDa subunit family. As to quaternary structure, NDH is composed of at least 16 different subunits, 5 of which are encoded in the nucleus. Requires [4Fe-4S] cluster as cofactor.

The protein resides in the plastid. It localises to the chloroplast thylakoid membrane. It catalyses the reaction a plastoquinone + NADH + (n+1) H(+)(in) = a plastoquinol + NAD(+) + n H(+)(out). The catalysed reaction is a plastoquinone + NADPH + (n+1) H(+)(in) = a plastoquinol + NADP(+) + n H(+)(out). In terms of biological role, NDH shuttles electrons from NAD(P)H:plastoquinone, via FMN and iron-sulfur (Fe-S) centers, to quinones in the photosynthetic chain and possibly in a chloroplast respiratory chain. The immediate electron acceptor for the enzyme in this species is believed to be plastoquinone. Couples the redox reaction to proton translocation, and thus conserves the redox energy in a proton gradient. In Guardiola tulocarpus, this protein is NAD(P)H-quinone oxidoreductase subunit I, chloroplastic.